The chain runs to 113 residues: Hydrogenase maturation factor HypA (113 aa).

Histidine 2 contacts Ni(2+). Residues cysteine 70, cysteine 73, cysteine 86, and cysteine 88 each contribute to the Zn(2+) site.

It belongs to the HypA/HybF family.

Functionally, involved in the maturation of [NiFe] hydrogenases. Required for nickel insertion into the metal center of the hydrogenase. This is Hydrogenase maturation factor HypA from Nostoc sp. (strain PCC 7120 / SAG 25.82 / UTEX 2576).